Consider the following 239-residue polypeptide: Pyridoxine 5'-phosphate synthase (239 aa).

Asn-7 serves as a coordination point for 3-amino-2-oxopropyl phosphate. 9–10 (DH) lines the 1-deoxy-D-xylulose 5-phosphate pocket. Arg-18 is a 3-amino-2-oxopropyl phosphate binding site. The active-site Proton acceptor is the His-43. 1-deoxy-D-xylulose 5-phosphate is bound by residues Arg-45 and His-50. The active-site Proton acceptor is Glu-70. 1-deoxy-D-xylulose 5-phosphate is bound at residue Thr-100. The active-site Proton donor is the His-192. 3-amino-2-oxopropyl phosphate-binding positions include Gly-193 and 214 to 215 (GH).

The protein belongs to the PNP synthase family. Homooctamer; tetramer of dimers.

It is found in the cytoplasm. The catalysed reaction is 3-amino-2-oxopropyl phosphate + 1-deoxy-D-xylulose 5-phosphate = pyridoxine 5'-phosphate + phosphate + 2 H2O + H(+). It participates in cofactor biosynthesis; pyridoxine 5'-phosphate biosynthesis; pyridoxine 5'-phosphate from D-erythrose 4-phosphate: step 5/5. Its function is as follows. Catalyzes the complicated ring closure reaction between the two acyclic compounds 1-deoxy-D-xylulose-5-phosphate (DXP) and 3-amino-2-oxopropyl phosphate (1-amino-acetone-3-phosphate or AAP) to form pyridoxine 5'-phosphate (PNP) and inorganic phosphate. In Pelagibacter ubique (strain HTCC1062), this protein is Pyridoxine 5'-phosphate synthase.